We begin with the raw amino-acid sequence, 281 residues long: Diaminopimelate epimerase (281 aa).

The substrate site is built by N13, Q51, and N70. C79 functions as the Proton donor in the catalytic mechanism. Substrate contacts are provided by residues 80-81 (GN), N163, N196, and 214-215 (ER). The Proton acceptor role is filled by C223. 224 to 225 (GS) is a substrate binding site.

This sequence belongs to the diaminopimelate epimerase family. Homodimer.

The protein localises to the cytoplasm. It catalyses the reaction (2S,6S)-2,6-diaminopimelate = meso-2,6-diaminopimelate. It participates in amino-acid biosynthesis; L-lysine biosynthesis via DAP pathway; DL-2,6-diaminopimelate from LL-2,6-diaminopimelate: step 1/1. Catalyzes the stereoinversion of LL-2,6-diaminopimelate (L,L-DAP) to meso-diaminopimelate (meso-DAP), a precursor of L-lysine and an essential component of the bacterial peptidoglycan. The protein is Diaminopimelate epimerase of Alcanivorax borkumensis (strain ATCC 700651 / DSM 11573 / NCIMB 13689 / SK2).